The sequence spans 293 residues: Glutamyl-Q tRNA(Asp) synthetase (293 aa).

L-glutamate-binding positions include 9 to 13 (RFAPS) and E45. The 'HIGH' region signature appears at 12–22 (PSPSGSLHFGS). 4 residues coordinate Zn(2+): C101, C103, Y115, and C119. Positions 172 and 190 each coordinate L-glutamate. Residues 228–232 (KLSKQ) carry the 'KMSKS' region motif. K231 is a binding site for ATP.

Belongs to the class-I aminoacyl-tRNA synthetase family. GluQ subfamily. It depends on Zn(2+) as a cofactor.

In terms of biological role, catalyzes the tRNA-independent activation of glutamate in presence of ATP and the subsequent transfer of glutamate onto a tRNA(Asp). Glutamate is transferred on the 2-amino-5-(4,5-dihydroxy-2-cyclopenten-1-yl) moiety of the queuosine in the wobble position of the QUC anticodon. In Shewanella frigidimarina (strain NCIMB 400), this protein is Glutamyl-Q tRNA(Asp) synthetase.